We begin with the raw amino-acid sequence, 61 residues long: Temporin-ALj (61 aa).

Positions 1-22 (MFTLKKSLLLLFFLATINLSFC) are cleaved as a signal peptide. The propeptide occupies 23 to 46 (EQERNAEEERRDEPDERNAEVEKR). Leucine amide is present on leucine 59.

Belongs to the frog skin active peptide (FSAP) family. Temporin subfamily. As to expression, expressed by the skin glands.

It is found in the secreted. In terms of biological role, antimicrobial peptide with activity against Gram-positive and Gram-negative bacteria and against fungi. Has been tested against S.aureus (MIC=7.5 ug/mL), B.pumilus (MIC=15.0 ug/mL), B.cereus (MIC=75.0 ug/mL), E.coli (MIC=15.0 ug/mL), B.dysenteriae (MIC=30.0 ug/mL), A.cacoaceticus (MIC=60.0 ug/mL), P.aeruginosa (MIC=7.5 ug/mL) and C.albicans (MIC=5.0 ug/mL). Also shows a weak hemolytic activity. This chain is Temporin-ALj, found in Amolops loloensis (Lolokou Sucker Frog).